Consider the following 333-residue polypeptide: Ketol-acid reductoisomerase (NADP(+)) (333 aa).

In terms of domain architecture, KARI N-terminal Rossmann spans 1 to 171 (MSNDTQPKIA…GGARANIIKT (171 aa)). NADP(+) contacts are provided by residues 14-17 (YGSQ), arginine 37, threonine 42, and 72-75 (DMVQ). The active site involves histidine 97. Glycine 123 lines the NADP(+) pocket. The KARI C-terminal knotted domain occupies 172-317 (TFKEETETDL…KKLRAKMVWL (146 aa)). Mg(2+) is bound by residues aspartate 180, glutamate 184, glutamate 216, and glutamate 220. Substrate is bound at residue serine 241.

Belongs to the ketol-acid reductoisomerase family. The cofactor is Mg(2+).

It catalyses the reaction (2R)-2,3-dihydroxy-3-methylbutanoate + NADP(+) = (2S)-2-acetolactate + NADPH + H(+). It carries out the reaction (2R,3R)-2,3-dihydroxy-3-methylpentanoate + NADP(+) = (S)-2-ethyl-2-hydroxy-3-oxobutanoate + NADPH + H(+). It participates in amino-acid biosynthesis; L-isoleucine biosynthesis; L-isoleucine from 2-oxobutanoate: step 2/4. The protein operates within amino-acid biosynthesis; L-valine biosynthesis; L-valine from pyruvate: step 2/4. In terms of biological role, involved in the biosynthesis of branched-chain amino acids (BCAA). Catalyzes an alkyl-migration followed by a ketol-acid reduction of (S)-2-acetolactate (S2AL) to yield (R)-2,3-dihydroxy-isovalerate. In the isomerase reaction, S2AL is rearranged via a Mg-dependent methyl migration to produce 3-hydroxy-3-methyl-2-ketobutyrate (HMKB). In the reductase reaction, this 2-ketoacid undergoes a metal-dependent reduction by NADPH to yield (R)-2,3-dihydroxy-isovalerate. In Xanthomonas euvesicatoria pv. vesicatoria (strain 85-10) (Xanthomonas campestris pv. vesicatoria), this protein is Ketol-acid reductoisomerase (NADP(+)).